The sequence spans 422 residues: Transcription termination factor Rho (422 aa).

Residues 52 to 127 form the Rho RNA-BD domain; that stretch reads EVGGDGVLEV…TRVTKINFDD (76 aa). ATP is bound by residues 173–178, 185–190, and R216; these read GKGQRG and RTGKTV.

It belongs to the Rho family. As to quaternary structure, homohexamer. The homohexamer assembles into an open ring structure.

In terms of biological role, facilitates transcription termination by a mechanism that involves Rho binding to the nascent RNA, activation of Rho's RNA-dependent ATPase activity, and release of the mRNA from the DNA template. This chain is Transcription termination factor Rho, found in Cereibacter sphaeroides (strain ATCC 17023 / DSM 158 / JCM 6121 / CCUG 31486 / LMG 2827 / NBRC 12203 / NCIMB 8253 / ATH 2.4.1.) (Rhodobacter sphaeroides).